Consider the following 72-residue polypeptide: Arrestin-E (72 aa).

The protein belongs to the arrestin family. As to expression, adrenal, cerebral cortex, heart, hypothalamus, intestine, liver, lung, pituitary, retina and testis.

This Rattus norvegicus (Rat) protein is Arrestin-E (Ear).